Reading from the N-terminus, the 1499-residue chain is DNA-directed RNA polymerase subunit beta' (1499 aa).

Residues Cys67, Cys69, Cys82, and Cys85 each coordinate Zn(2+). The Mg(2+) site is built by Asp499, Asp501, and Asp503. Residues Cys867, Cys943, Cys950, and Cys953 each contribute to the Zn(2+) site.

The protein belongs to the RNA polymerase beta' chain family. In terms of assembly, the RNAP catalytic core consists of 2 alpha, 1 beta, 1 beta' and 1 omega subunit. When a sigma factor is associated with the core the holoenzyme is formed, which can initiate transcription. It depends on Mg(2+) as a cofactor. Zn(2+) serves as cofactor.

It carries out the reaction RNA(n) + a ribonucleoside 5'-triphosphate = RNA(n+1) + diphosphate. In terms of biological role, DNA-dependent RNA polymerase catalyzes the transcription of DNA into RNA using the four ribonucleoside triphosphates as substrates. The chain is DNA-directed RNA polymerase subunit beta' from Prosthecochloris aestuarii (strain DSM 271 / SK 413).